A 122-amino-acid polypeptide reads, in one-letter code: Large ribosomal subunit protein uL14 (122 aa).

This sequence belongs to the universal ribosomal protein uL14 family. In terms of assembly, part of the 50S ribosomal subunit. Forms a cluster with proteins L3 and L19. In the 70S ribosome, L14 and L19 interact and together make contacts with the 16S rRNA in bridges B5 and B8.

Its function is as follows. Binds to 23S rRNA. Forms part of two intersubunit bridges in the 70S ribosome. The polypeptide is Large ribosomal subunit protein uL14 (Kineococcus radiotolerans (strain ATCC BAA-149 / DSM 14245 / SRS30216)).